The sequence spans 389 residues: 26S proteasome regulatory subunit 10B (389 aa).

At lysine 72 the chain carries N6-acetyllysine. 174 to 181 contacts ATP; sequence GPPGTGKT. An N6-acetyllysine modification is found at lysine 206. Serine 244 is modified (phosphoserine).

The protein belongs to the AAA ATPase family. Component of the 19S proteasome regulatory particle complex. The 26S proteasome consists of a 20S core particle (CP) and two 19S regulatory subunits (RP). The regulatory particle is made of a lid composed of 9 subunits, a base containing 6 ATPases including PSMC6 and few additional components. Interacts with PAAF1.

It localises to the cytoplasm. Its subcellular location is the nucleus. Component of the 26S proteasome, a multiprotein complex involved in the ATP-dependent degradation of ubiquitinated proteins. This complex plays a key role in the maintenance of protein homeostasis by removing misfolded or damaged proteins, which could impair cellular functions, and by removing proteins whose functions are no longer required. Therefore, the proteasome participates in numerous cellular processes, including cell cycle progression, apoptosis, or DNA damage repair. PSMC6 belongs to the heterohexameric ring of AAA (ATPases associated with diverse cellular activities) proteins that unfolds ubiquitinated target proteins that are concurrently translocated into a proteolytic chamber and degraded into peptides. This chain is 26S proteasome regulatory subunit 10B (PSMC6), found in Homo sapiens (Human).